The primary structure comprises 419 residues: Pyrophosphate--fructose 6-phosphate 1-phosphotransferase (419 aa).

Glycine 13 is a binding site for diphosphate. Substrate is bound by residues 142 to 144, 190 to 192, glutamate 247, and 297 to 300; these read TVD, MGR, and YLQR. The active-site Proton acceptor is aspartate 144.

It belongs to the phosphofructokinase type A (PFKA) family. PPi-dependent PFK group II subfamily. Clade 'B2' sub-subfamily. In terms of assembly, homodimer. It depends on Mg(2+) as a cofactor.

The protein localises to the cytoplasm. The catalysed reaction is beta-D-fructose 6-phosphate + diphosphate = beta-D-fructose 1,6-bisphosphate + phosphate + H(+). It participates in carbohydrate degradation; glycolysis; D-glyceraldehyde 3-phosphate and glycerone phosphate from D-glucose: step 3/4. Non-allosteric. In terms of biological role, catalyzes the phosphorylation of D-fructose 6-phosphate, the first committing step of glycolysis. Uses inorganic phosphate (PPi) as phosphoryl donor instead of ATP like common ATP-dependent phosphofructokinases (ATP-PFKs), which renders the reaction reversible, and can thus function both in glycolysis and gluconeogenesis. Consistently, PPi-PFK can replace the enzymes of both the forward (ATP-PFK) and reverse (fructose-bisphosphatase (FBPase)) reactions. This is Pyrophosphate--fructose 6-phosphate 1-phosphotransferase from Halomonas elongata (strain ATCC 33173 / DSM 2581 / NBRC 15536 / NCIMB 2198 / 1H9).